The primary structure comprises 785 residues: Uncoating factor OPG117 (785 aa).

This sequence belongs to the orthopoxvirus OPG117 family. Homomultimer; hexamer. Interacts with OPG148.

The protein resides in the host cytoplasm. Multifunctional protein required for genome uncoating and replication. Major viral uncoating protein that is required for the release of the viral genome from incoming viral cores containing the viral DNA genome. Possesses an ATPase activity that is required for hexamerization and uncoating. The polypeptide is Uncoating factor OPG117 (OPG117) (Cynomys gunnisoni (Gunnison's prairie dog)).